Consider the following 274-residue polypeptide: Protein RecA (274 aa).

43 to 50 provides a ligand contact to ATP; sequence GPESSGKT.

This sequence belongs to the RecA family.

Its subcellular location is the cytoplasm. Functionally, can catalyze the hydrolysis of ATP in the presence of single-stranded DNA, the ATP-dependent uptake of single-stranded DNA by duplex DNA, and the ATP-dependent hybridization of homologous single-stranded DNAs. It interacts with LexA causing its activation and leading to its autocatalytic cleavage. This is Protein RecA from Neisseria pharyngis.